A 360-amino-acid chain; its full sequence is Putative F-box protein At3g47150 (360 aa).

Positions 6-56 (NTTQIYIPLDLQINILLRLPVKSLLRFRCVSKLWCSIITSHDFRNRHFNIT) constitute an F-box domain.

The protein is Putative F-box protein At3g47150 of Arabidopsis thaliana (Mouse-ear cress).